A 354-amino-acid polypeptide reads, in one-letter code: UDP-N-acetylglucosamine--N-acetylmuramyl-(pentapeptide) pyrophosphoryl-undecaprenol N-acetylglucosamine transferase (354 aa).

UDP-N-acetyl-alpha-D-glucosamine-binding positions include 11 to 13 (TAG), Arg164, Ser194, and Gln289.

It belongs to the glycosyltransferase 28 family. MurG subfamily.

It is found in the cell membrane. The catalysed reaction is di-trans,octa-cis-undecaprenyl diphospho-N-acetyl-alpha-D-muramoyl-L-alanyl-D-glutamyl-meso-2,6-diaminopimeloyl-D-alanyl-D-alanine + UDP-N-acetyl-alpha-D-glucosamine = di-trans,octa-cis-undecaprenyl diphospho-[N-acetyl-alpha-D-glucosaminyl-(1-&gt;4)]-N-acetyl-alpha-D-muramoyl-L-alanyl-D-glutamyl-meso-2,6-diaminopimeloyl-D-alanyl-D-alanine + UDP + H(+). The protein operates within cell wall biogenesis; peptidoglycan biosynthesis. Its function is as follows. Cell wall formation. Catalyzes the transfer of a GlcNAc subunit on undecaprenyl-pyrophosphoryl-MurNAc-pentapeptide (lipid intermediate I) to form undecaprenyl-pyrophosphoryl-MurNAc-(pentapeptide)GlcNAc (lipid intermediate II). This chain is UDP-N-acetylglucosamine--N-acetylmuramyl-(pentapeptide) pyrophosphoryl-undecaprenol N-acetylglucosamine transferase, found in Lachnospira eligens (strain ATCC 27750 / DSM 3376 / VPI C15-48 / C15-B4) (Eubacterium eligens).